Reading from the N-terminus, the 269-residue chain is uncharacterized protein (269 aa).

This is an uncharacterized protein from Acanthamoeba polyphaga (Amoeba).